We begin with the raw amino-acid sequence, 379 residues long: Putative F-box protein At2g33190 (379 aa).

Positions 6–53 (NGWSKLYPDLLRSIFESLSCLDFHRAGTVCSNWYAVSRSCPLYPWRIV) constitute an F-box domain.

The polypeptide is Putative F-box protein At2g33190 (Arabidopsis thaliana (Mouse-ear cress)).